A 270-amino-acid chain; its full sequence is 3-phenylpropionate-dihydrodiol/cinnamic acid-dihydrodiol dehydrogenase (270 aa).

10 to 34 (FITGGGSGLGLALVERFIEEGAQVA) is an NAD(+) binding site. A substrate-binding site is contributed by Ser-143. The active-site Proton acceptor is Tyr-156.

The protein belongs to the short-chain dehydrogenases/reductases (SDR) family.

The enzyme catalyses 3-(cis-5,6-dihydroxycyclohexa-1,3-dien-1-yl)propanoate + NAD(+) = 3-(2,3-dihydroxyphenyl)propanoate + NADH + H(+). The catalysed reaction is (2E)-3-(cis-5,6-dihydroxycyclohexa-1,3-dien-1-yl)prop-2-enoate + NAD(+) = (2E)-3-(2,3-dihydroxyphenyl)prop-2-enoate + NADH + H(+). The protein operates within aromatic compound metabolism; 3-phenylpropanoate degradation. Its function is as follows. Converts 3-phenylpropionate-dihydrodiol (PP-dihydrodiol) and cinnamic acid-dihydrodiol (CI-dihydrodiol) into 3-(2,3-dihydroxylphenyl)propanoic acid (DHPP) and 2,3-dihydroxicinnamic acid (DHCI), respectively. In Escherichia coli (strain ATCC 8739 / DSM 1576 / NBRC 3972 / NCIMB 8545 / WDCM 00012 / Crooks), this protein is 3-phenylpropionate-dihydrodiol/cinnamic acid-dihydrodiol dehydrogenase.